The chain runs to 246 residues: Sortase B (246 aa).

Residues Ser5–Trp24 form a helical membrane-spanning segment.

The protein belongs to the bacterial sortase family. Class B subfamily.

It is found in the cell membrane. Transpeptidase that anchors surface proteins to the cell wall. Recognizes and modifies its substrate by proteolytic cleavage of a C-terminal sorting signal. Following cleavage, a covalent intermediate is formed via a thioester bond between the sortase and its substrate, which is then transferred and covalently attached to the cell wall. Catalyzes a cell wall sorting reaction in which a surface protein with the consensus sorting signal NP(Q/K)(T/S)(N/G/S)(D/A) is cleaved between the fourth and fifth residues, and the fourth position is linked to the cell wall. This is not the major sortase in Listeria, it seems to anchor only 2 proteins, Hbp2 (SvpA) and Hbp1. This is Sortase B from Listeria monocytogenes serovar 1/2a (strain ATCC BAA-679 / EGD-e).